The sequence spans 176 residues: Adenine phosphoribosyltransferase (176 aa).

This sequence belongs to the purine/pyrimidine phosphoribosyltransferase family. In terms of assembly, homodimer.

Its subcellular location is the cytoplasm. It carries out the reaction AMP + diphosphate = 5-phospho-alpha-D-ribose 1-diphosphate + adenine. It functions in the pathway purine metabolism; AMP biosynthesis via salvage pathway; AMP from adenine: step 1/1. Functionally, catalyzes a salvage reaction resulting in the formation of AMP, that is energically less costly than de novo synthesis. The chain is Adenine phosphoribosyltransferase from Roseobacter denitrificans (strain ATCC 33942 / OCh 114) (Erythrobacter sp. (strain OCh 114)).